A 357-amino-acid polypeptide reads, in one-letter code: UDP-N-acetylglucosamine--N-acetylmuramyl-(pentapeptide) pyrophosphoryl-undecaprenol N-acetylglucosamine transferase (357 aa).

UDP-N-acetyl-alpha-D-glucosamine contacts are provided by residues 15–17 (TGG), Asn-124, Arg-165, Ser-194, and Gln-288.

It belongs to the glycosyltransferase 28 family. MurG subfamily.

The protein resides in the cell inner membrane. The enzyme catalyses di-trans,octa-cis-undecaprenyl diphospho-N-acetyl-alpha-D-muramoyl-L-alanyl-D-glutamyl-meso-2,6-diaminopimeloyl-D-alanyl-D-alanine + UDP-N-acetyl-alpha-D-glucosamine = di-trans,octa-cis-undecaprenyl diphospho-[N-acetyl-alpha-D-glucosaminyl-(1-&gt;4)]-N-acetyl-alpha-D-muramoyl-L-alanyl-D-glutamyl-meso-2,6-diaminopimeloyl-D-alanyl-D-alanine + UDP + H(+). Its pathway is cell wall biogenesis; peptidoglycan biosynthesis. Its function is as follows. Cell wall formation. Catalyzes the transfer of a GlcNAc subunit on undecaprenyl-pyrophosphoryl-MurNAc-pentapeptide (lipid intermediate I) to form undecaprenyl-pyrophosphoryl-MurNAc-(pentapeptide)GlcNAc (lipid intermediate II). In Nostoc punctiforme (strain ATCC 29133 / PCC 73102), this protein is UDP-N-acetylglucosamine--N-acetylmuramyl-(pentapeptide) pyrophosphoryl-undecaprenol N-acetylglucosamine transferase.